Consider the following 99-residue polypeptide: MSESKKYEITYIVRPDIDDAAKTALVDRFDKILTDNGAQVIDSKDWSKRRFAYEIGGFNEGTYHIVNLTATDDAALNEFDRLSKINDDILRHMIVKRED.

Belongs to the bacterial ribosomal protein bS6 family.

Binds together with bS18 to 16S ribosomal RNA. The chain is Small ribosomal subunit protein bS6 from Lactiplantibacillus plantarum (strain ATCC BAA-793 / NCIMB 8826 / WCFS1) (Lactobacillus plantarum).